The sequence spans 500 residues: L-arabinose isomerase (500 aa).

Residues Glu306, Glu333, His349, and His448 each coordinate Mn(2+).

The protein belongs to the arabinose isomerase family. It depends on Mn(2+) as a cofactor.

The enzyme catalyses beta-L-arabinopyranose = L-ribulose. It participates in carbohydrate degradation; L-arabinose degradation via L-ribulose; D-xylulose 5-phosphate from L-arabinose (bacterial route): step 1/3. In terms of biological role, catalyzes the conversion of L-arabinose to L-ribulose. The polypeptide is L-arabinose isomerase (Koribacter versatilis (strain Ellin345)).